Reading from the N-terminus, the 132-residue chain is Small ribosomal subunit protein uS8 (132 aa).

It belongs to the universal ribosomal protein uS8 family. Part of the 30S ribosomal subunit. Contacts proteins S5 and S12.

One of the primary rRNA binding proteins, it binds directly to 16S rRNA central domain where it helps coordinate assembly of the platform of the 30S subunit. This is Small ribosomal subunit protein uS8 from Borreliella burgdorferi (strain ZS7) (Borrelia burgdorferi).